The chain runs to 380 residues: 3-methylitaconate isomerase (380 aa).

This sequence belongs to the PrpF family. As to quaternary structure, homotetramer.

The enzyme catalyses 2-methylene-3-methylsuccinate = dimethylmaleate. The protein operates within cofactor degradation; nicotinate degradation; propanoate and pyruvate from 6-hydroxynicotinate: step 6/8. Its activity is regulated as follows. Inhibited by oxidized glutathione, p-chloromercuriphenylsulfonic acid and iodoacetic acid. Not inhibited by the chelating agent alpha,alpha-dipyridyl. Activity is slightly increased by EDTA. Not activated by Fe(2+), Mg(2+), Mn(2+) or Ca(2+). Unaffected by K(+), Na(+), NH4(+), Rb(+) or Li(+). Catalyzes the reversible isomerization of (R)-3-methylitaconate to 2,3-dimethylmaleate. Has very low isomerase activity with itaconate. This Eubacterium barkeri (Clostridium barkeri) protein is 3-methylitaconate isomerase (mii).